We begin with the raw amino-acid sequence, 289 residues long: Ribosome-inactivating protein alpha-trichosanthin (289 aa).

An N-terminal signal peptide occupies residues 1 to 23 (MIRFLVLSLLILTLFLTTPAVEG). Residue Glu183 is part of the active site. Residues 271–289 (AMDDDVPMTQSFGCGSYAI) constitute a propeptide, removed in mature form.

The protein belongs to the ribosome-inactivating protein family. Type 1 RIP subfamily.

The enzyme catalyses Endohydrolysis of the N-glycosidic bond at one specific adenosine on the 28S rRNA.. Inactivates eukaryotic 60S ribosomal subunits. The polypeptide is Ribosome-inactivating protein alpha-trichosanthin (Trichosanthes kirilowii (Chinese snake gourd)).